A 116-amino-acid polypeptide reads, in one-letter code: MSFNDQQCKQPCVPPPCLQKTQEKCQAQAEDVCVSSCQDPCQDKCPQQAQEVCVSQCQELSQGNCPQQGQDPCLPPSQDQCLPQCAEPCQELAQTKCVEEFPQKVQEKCSSQSKGK.

This chain is Proline-rich protein 9 (Prr9), found in Mus musculus (Mouse).